The chain runs to 256 residues: ATG8-interacting protein 1 (256 aa).

The AIM (Atg8-family-interacting motif) motif lies at 14–17 (WEVV). Residues 181–200 (ANAIWSLFFAAAVTGLVVLG) form a helical membrane-spanning segment. Positions 208-211 (WQVL) match the AIM (Atg8-family-interacting motif) motif.

In terms of assembly, interacts with ATG8F. Interacts with ATG8H. Interacts with APE1 and PSBS/NPQ4.

Its subcellular location is the endoplasmic reticulum membrane. The protein localises to the membrane. The protein resides in the plastid. It localises to the chloroplast membrane. Functionally, involved in a special stress-induced plastid-to-vacuole protein trafficking pathway. Interacts with ATG8F in plastid bodies to subsequently enable their delivery to the vacuole by an autophagic pathway. Interacts with the plastid proteins APE1 and PSBS/NPQ4 and may recruit them as cargo into plastid bodies that may be recognized by the autophagy machinery for degradation in the vacuole. Involved in the alleviation of damage caused by salt stress during plant development, probably through its involvement in plastid-to-vacuole and ER-to-vacuole trafficking. Plays a role in seed germination in response to exogenous abscisic acid (ABA) treatment. In Arabidopsis thaliana (Mouse-ear cress), this protein is ATG8-interacting protein 1.